The chain runs to 355 residues: Phospho-N-acetylmuramoyl-pentapeptide-transferase (355 aa).

Helical transmembrane passes span 3-23 (GVLI…PWVI), 56-76 (VIIV…GIGF), 80-100 (GLLV…DDYI), 120-140 (AAVA…AGLL), 152-172 (TSLT…IAAT), 185-205 (LAAG…FWQF), 224-244 (PLDV…FLWW), 251-271 (IFMG…IAIV), 276-296 (LLLV…MIQV), and 330-350 (FWIV…AEFL).

The protein belongs to the glycosyltransferase 4 family. MraY subfamily. The cofactor is Mg(2+).

The protein localises to the cell membrane. The catalysed reaction is UDP-N-acetyl-alpha-D-muramoyl-L-alanyl-gamma-D-glutamyl-meso-2,6-diaminopimeloyl-D-alanyl-D-alanine + di-trans,octa-cis-undecaprenyl phosphate = di-trans,octa-cis-undecaprenyl diphospho-N-acetyl-alpha-D-muramoyl-L-alanyl-D-glutamyl-meso-2,6-diaminopimeloyl-D-alanyl-D-alanine + UMP. It participates in cell wall biogenesis; peptidoglycan biosynthesis. In terms of biological role, catalyzes the initial step of the lipid cycle reactions in the biosynthesis of the cell wall peptidoglycan: transfers peptidoglycan precursor phospho-MurNAc-pentapeptide from UDP-MurNAc-pentapeptide onto the lipid carrier undecaprenyl phosphate, yielding undecaprenyl-pyrophosphoryl-MurNAc-pentapeptide, known as lipid I. The sequence is that of Phospho-N-acetylmuramoyl-pentapeptide-transferase from Frankia alni (strain DSM 45986 / CECT 9034 / ACN14a).